The primary structure comprises 137 residues: Outer membrane protein assembly factor BamE (137 aa).

The N-terminal stretch at 1 to 18 is a signal peptide; it reads MQVKTLLGATFLALSLAS. Cys-19 carries N-palmitoyl cysteine lipidation. A lipid anchor (S-diacylglycerol cysteine) is attached at Cys-19.

The protein belongs to the BamE family. In terms of assembly, part of the Bam complex.

The protein resides in the cell outer membrane. Functionally, part of the outer membrane protein assembly complex, which is involved in assembly and insertion of beta-barrel proteins into the outer membrane. In Haemophilus influenzae (strain ATCC 51907 / DSM 11121 / KW20 / Rd), this protein is Outer membrane protein assembly factor BamE.